The chain runs to 279 residues: Undecaprenyl-diphosphatase (279 aa).

7 consecutive transmembrane segments (helical) span residues 10–30, 48–68, 96–116, 128–148, 203–223, 229–249, and 259–279; these read FICF…FLPI, LGVS…IYYF, LFIY…LIKL, GLFS…LSEI, SFLV…FSLF, IDII…IFAI, and NNTL…LTTL.

The protein belongs to the UppP family.

It is found in the cell inner membrane. It carries out the reaction di-trans,octa-cis-undecaprenyl diphosphate + H2O = di-trans,octa-cis-undecaprenyl phosphate + phosphate + H(+). Catalyzes the dephosphorylation of undecaprenyl diphosphate (UPP). Confers resistance to bacitracin. The sequence is that of Undecaprenyl-diphosphatase from Prochlorococcus marinus (strain NATL1A).